The following is a 193-amino-acid chain: MQRVTSYLPAGTPSSHPTAQVKLPHDLRHLRRKLLHLENGEMVMLDLKDPVLFANGDLLVRDDGELIEILAADEKLFEIRGRDRTHLVELAWHLGNRHLAAQIEEDRIVILRDHVIRSMLQGLGATVLDIDEPFQPARGAYHSHGAHSHDQGHAAHDHGNEHKHDHGHDHVHGPGCDHDHDHDHGHHHDHKHD.

The tract at residues 138-193 (RGAYHSHGAHSHDQGHAAHDHGNEHKHDHGHDHVHGPGCDHDHDHDHGHHHDHKHD) is disordered. The span at 147-193 (HSHDQGHAAHDHGNEHKHDHGHDHVHGPGCDHDHDHDHGHHHDHKHD) shows a compositional bias: basic and acidic residues.

Belongs to the UreE family.

It localises to the cytoplasm. Its function is as follows. Involved in urease metallocenter assembly. Binds nickel. Probably functions as a nickel donor during metallocenter assembly. The protein is Urease accessory protein UreE of Rhizobium leguminosarum bv. trifolii (strain WSM2304).